Reading from the N-terminus, the 101-residue chain is Chaperone modulatory protein CbpM (101 aa).

It belongs to the CbpM family.

Its function is as follows. Interacts with CbpA and inhibits both the DnaJ-like co-chaperone activity and the DNA binding activity of CbpA. Together with CbpA, modulates the activity of the DnaK chaperone system. Does not inhibit the co-chaperone activity of DnaJ. This is Chaperone modulatory protein CbpM from Pseudomonas entomophila (strain L48).